Reading from the N-terminus, the 234-residue chain is t-SNARE protein aex-4 (234 aa).

T-SNARE coiled-coil homology domains lie at 37-99 and 170-232; these read AKLN…ITAM and DAIE…VKKL.

The protein belongs to the SNAP-25 family. As to expression, expressed in intestinal cells.

Its subcellular location is the cell membrane. T-SNARE protein which regulates the secretion of aex-5 from intestinal cells. Involved in the defecation motor program, which is a coordinated series of three muscle contractions that occurs every 45 seconds. This is t-SNARE protein aex-4 from Caenorhabditis elegans.